We begin with the raw amino-acid sequence, 63 residues long: Alpha-conotoxin-like Sm1.3 (63 aa).

Residues 1–16 form the signal peptide; that stretch reads MFTVFLLVVLATTVVS. A propeptide spanning residues 17-43 is cleaved from the precursor; sequence SPSDRASDGRNAAANEKASDVIALALK. Disulfide bonds link C45–C51 and C46–C59. M58 is modified (methionine sulfoxide; partial). C59 bears the Cysteine amide; partial mark.

It belongs to the conotoxin A superfamily. In terms of tissue distribution, expressed by the venom duct.

It localises to the secreted. In terms of biological role, alpha-conotoxins act on postsynaptic membranes, they bind to the nicotinic acetylcholine receptors (nAChR) and thus inhibit them. This Conus stercusmuscarum (Fly-specked cone) protein is Alpha-conotoxin-like Sm1.3.